The chain runs to 316 residues: MSVREKMLEILEGIDIRFKEPLHSYSYTKVGGEADYLVFPRNRFELARVVKFANQENIPWMVLGNASNIIVRDGGIRGFVILCDKLNNVSVDGYTIEAEAGANLIETTRIALRHSLTGFEFACGIPGSVGGAVFMNAGAYGGEIAHILQSCKVLTKDGEIETLSAKDLAFGYRHSAIQESGAVVLSVKFALAPGTHQVIKQEMDRLTHLRELKQPLEYPSCGSVFKRPVGHFAGQLISEAGLKGYRIGGVEVSEKHAGFMINVADGTAKDYEDLIQSVIEKVKEHSGITLEREVRILGESLSVAKMYAGGFTPCKR.

The region spanning 30-194 is the FAD-binding PCMH-type domain; the sequence is VGGEADYLVF…LSVKFALAPG (165 aa). The active site involves arginine 173. Serine 223 serves as the catalytic Proton donor. Glutamate 293 is an active-site residue.

It belongs to the MurB family. FAD is required as a cofactor.

The protein resides in the cytoplasm. The catalysed reaction is UDP-N-acetyl-alpha-D-muramate + NADP(+) = UDP-N-acetyl-3-O-(1-carboxyvinyl)-alpha-D-glucosamine + NADPH + H(+). It participates in cell wall biogenesis; peptidoglycan biosynthesis. Cell wall formation. The polypeptide is UDP-N-acetylenolpyruvoylglucosamine reductase (Streptococcus pneumoniae serotype 2 (strain D39 / NCTC 7466)).